Reading from the N-terminus, the 371-residue chain is Protein disulfide isomerase-like 2-2 (371 aa).

Positions 1 to 27 (MAIPRISPRKTLPLFAALALALAWAFA) are cleaved as a signal peptide. Thioredoxin domains lie at 28-143 (APAF…TEGG) and 147-262 (KLAT…EKCG). Residues Cys64, Cys67, Cys183, and Cys186 each act as nucleophile in the active site. 2 cysteine pairs are disulfide-bonded: Cys64-Cys67 and Cys183-Cys186.

This sequence belongs to the protein disulfide isomerase family.

Its subcellular location is the secreted. It catalyses the reaction Catalyzes the rearrangement of -S-S- bonds in proteins.. Functionally, acts as a protein-folding catalyst that interacts with nascent polypeptides to catalyze the formation, isomerization, and reduction or oxidation of disulfide bonds. May play a role in storage protein biogenesis. The chain is Protein disulfide isomerase-like 2-2 (PDIL2-2) from Oryza sativa subsp. japonica (Rice).